Reading from the N-terminus, the 64-residue chain is MVRYRRHSRSRSRSRYRRRRRRRLRNRRRRYRRSRRGRRRRRRGSRRGYSRRRYQSRRRRRRRY.

A disordered region spans residues 1–64 (MVRYRRHSRS…QSRRRRRRRY (64 aa)).

This sequence belongs to the protamine P1 family. In terms of tissue distribution, testis.

It localises to the nucleus. The protein localises to the chromosome. Functionally, protamines substitute for histones in the chromatin of sperm during the haploid phase of spermatogenesis. They compact sperm DNA into a highly condensed, stable and inactive complex. The protein is Sperm protamine P1 (PRM1) of Dromiciops gliroides (Monito del Monte).